Consider the following 211-residue polypeptide: Urease accessory protein UreG (211 aa).

11–18 (GPVGAGKT) contacts GTP.

Belongs to the SIMIBI class G3E GTPase family. UreG subfamily. Homodimer. UreD, UreF and UreG form a complex that acts as a GTP-hydrolysis-dependent molecular chaperone, activating the urease apoprotein by helping to assemble the nickel containing metallocenter of UreC. The UreE protein probably delivers the nickel.

The protein resides in the cytoplasm. Functionally, facilitates the functional incorporation of the urease nickel metallocenter. This process requires GTP hydrolysis, probably effectuated by UreG. The chain is Urease accessory protein UreG from Actinobacillus pleuropneumoniae serotype 3 (strain JL03).